The primary structure comprises 138 residues: Aspartate 1-decarboxylase (138 aa).

The active-site Schiff-base intermediate with substrate; via pyruvic acid is the Ser25. Ser25 bears the Pyruvic acid (Ser) mark. Residue Thr57 coordinates substrate. The active-site Proton donor is Tyr58. 73-75 (GAA) is a substrate binding site. The disordered stretch occupies residues 117–138 (VDADPTAPPAPGLERSPLAEPV).

This sequence belongs to the PanD family. Heterooctamer of four alpha and four beta subunits. Pyruvate serves as cofactor. Post-translationally, is synthesized initially as an inactive proenzyme, which is activated by self-cleavage at a specific serine bond to produce a beta-subunit with a hydroxyl group at its C-terminus and an alpha-subunit with a pyruvoyl group at its N-terminus.

It localises to the cytoplasm. The catalysed reaction is L-aspartate + H(+) = beta-alanine + CO2. It participates in cofactor biosynthesis; (R)-pantothenate biosynthesis; beta-alanine from L-aspartate: step 1/1. In terms of biological role, catalyzes the pyruvoyl-dependent decarboxylation of aspartate to produce beta-alanine. In Clavibacter michiganensis subsp. michiganensis (strain NCPPB 382), this protein is Aspartate 1-decarboxylase.